The following is a 433-amino-acid chain: Homogentisate 1,2-dioxygenase (433 aa).

The active-site Proton acceptor is the histidine 288. Residues histidine 331 and glutamate 337 each coordinate Fe cation. Tyrosine 346 and histidine 367 together coordinate homogentisate. Position 367 (histidine 367) interacts with Fe cation.

It belongs to the homogentisate dioxygenase family. As to quaternary structure, hexamer; dimer of trimers. Fe cation is required as a cofactor.

It carries out the reaction homogentisate + O2 = 4-maleylacetoacetate + H(+). It participates in amino-acid degradation; L-phenylalanine degradation; acetoacetate and fumarate from L-phenylalanine: step 4/6. Involved in the catabolism of homogentisate (2,5-dihydroxyphenylacetate or 2,5-OH-PhAc), a central intermediate in the degradation of phenylalanine and tyrosine. Catalyzes the oxidative ring cleavage of the aromatic ring of homogentisate to yield maleylacetoacetate. The chain is Homogentisate 1,2-dioxygenase from Pseudomonas entomophila (strain L48).